We begin with the raw amino-acid sequence, 146 residues long: Hemoglobin subunit beta (146 aa).

Val-1 is subject to N-acetylvaline. Residues 2–146 (HLTGEEKSAV…VANALAHKYH (145 aa)) form the Globin domain. At Thr-12 the chain carries Phosphothreonine. Residue Ser-44 is modified to Phosphoserine. The residue at position 59 (Lys-59) is an N6-acetyllysine. His-63 is a binding site for heme b. N6-acetyllysine is present on Lys-82. Residue His-92 participates in heme b binding. Cys-93 is subject to S-nitrosocysteine. Lys-144 bears the N6-acetyllysine mark.

This sequence belongs to the globin family. In terms of assembly, heterotetramer of two alpha chains and two beta chains. As to expression, red blood cells.

In terms of biological role, involved in oxygen transport from the lung to the various peripheral tissues. This Mico argentatus (Silvery marmoset) protein is Hemoglobin subunit beta (HBB).